The chain runs to 148 residues: uncharacterized protein (148 aa).

This is an uncharacterized protein from Saccharomyces cerevisiae (strain ATCC 204508 / S288c) (Baker's yeast).